The primary structure comprises 357 residues: Elongation factor Ts (357 aa).

The interval 82–85 (TDFV) is involved in Mg(2+) ion dislocation from EF-Tu.

Belongs to the EF-Ts family.

The protein localises to the cytoplasm. Associates with the EF-Tu.GDP complex and induces the exchange of GDP to GTP. It remains bound to the aminoacyl-tRNA.EF-Tu.GTP complex up to the GTP hydrolysis stage on the ribosome. The chain is Elongation factor Ts from Campylobacter jejuni subsp. jejuni serotype O:6 (strain 81116 / NCTC 11828).